Reading from the N-terminus, the 198-residue chain is Small ribosomal subunit protein eS1 (198 aa).

It belongs to the eukaryotic ribosomal protein eS1 family.

The polypeptide is Small ribosomal subunit protein eS1 (Nanoarchaeum equitans (strain Kin4-M)).